The sequence spans 183 residues: Inner membrane-spanning protein YciB (183 aa).

Helical transmembrane passes span 22–44 (VQAA…RILF), 53–73 (IVGL…DLAF), 76–96 (WKVT…QYVF), 121–141 (LGWA…SQLF), and 153–173 (GFTG…YPYI).

Belongs to the YciB family.

Its subcellular location is the cell inner membrane. Plays a role in cell envelope biogenesis, maintenance of cell envelope integrity and membrane homeostasis. In Haemophilus ducreyi (strain 35000HP / ATCC 700724), this protein is Inner membrane-spanning protein YciB.